The chain runs to 309 residues: tRNA dimethylallyltransferase (309 aa).

13-20 (GPTAVGKS) is an ATP binding site. 15–20 (TAVGKS) contacts substrate.

The protein belongs to the IPP transferase family. In terms of assembly, monomer. The cofactor is Mg(2+).

The catalysed reaction is adenosine(37) in tRNA + dimethylallyl diphosphate = N(6)-dimethylallyladenosine(37) in tRNA + diphosphate. Functionally, catalyzes the transfer of a dimethylallyl group onto the adenine at position 37 in tRNAs that read codons beginning with uridine, leading to the formation of N6-(dimethylallyl)adenosine (i(6)A). The sequence is that of tRNA dimethylallyltransferase from Lacticaseibacillus paracasei (strain ATCC 334 / BCRC 17002 / CCUG 31169 / CIP 107868 / KCTC 3260 / NRRL B-441) (Lactobacillus paracasei).